A 141-amino-acid polypeptide reads, in one-letter code: VHWSEVELHEITTTWKSIDKHSLGAKALARMFIVYPWTTRYFGNLKEFTACSYGVKEHAKKVTGALGVAVTHLGDVKSQFTDLSKKHAEELHVDVESFKLLAKCFVVELGILLKDKFAPQTQAIWEKYFGVVVDAISKEYH.

The Globin domain maps to 2 to 141; that stretch reads HWSEVELHEI…VVDAISKEYH (140 aa). The heme b site is built by histidine 58 and histidine 87.

The protein belongs to the globin family. Heterotetramer of two alpha chains and two beta chains. In terms of tissue distribution, red blood cells.

Involved in oxygen transport from the lung to the various peripheral tissues. This Heterodontus portusjacksoni (Port Jackson shark) protein is Hemoglobin subunit beta (HBB).